The sequence spans 129 residues: Cytochrome c oxidase subunit 5B, mitochondrial (129 aa).

The N-terminal 31 residues, 1–31 (MASRLLRGAGALAAQTLRARGPNGVAVVRSM), are a transit peptide targeting the mitochondrion. N6-acetyllysine occurs at positions 68 and 86. Zn(2+)-binding residues include Cys91, Cys93, Cys113, and Cys116. Lys121 bears the N6-acetyllysine mark.

The protein belongs to the cytochrome c oxidase subunit 5B family. Component of the cytochrome c oxidase (complex IV, CIV), a multisubunit enzyme composed of 14 subunits. The complex is composed of a catalytic core of 3 subunits MT-CO1, MT-CO2 and MT-CO3, encoded in the mitochondrial DNA, and 11 supernumerary subunits COX4I, COX5A, COX5B, COX6A, COX6B, COX6C, COX7A, COX7B, COX7C, COX8 and NDUFA4, which are encoded in the nuclear genome. The complex exists as a monomer or a dimer and forms supercomplexes (SCs) in the inner mitochondrial membrane with NADH-ubiquinone oxidoreductase (complex I, CI) and ubiquinol-cytochrome c oxidoreductase (cytochrome b-c1 complex, complex III, CIII), resulting in different assemblies (supercomplex SCI(1)III(2)IV(1) and megacomplex MCI(2)III(2)IV(2)).

The protein localises to the mitochondrion inner membrane. It functions in the pathway energy metabolism; oxidative phosphorylation. Functionally, component of the cytochrome c oxidase, the last enzyme in the mitochondrial electron transport chain which drives oxidative phosphorylation. The respiratory chain contains 3 multisubunit complexes succinate dehydrogenase (complex II, CII), ubiquinol-cytochrome c oxidoreductase (cytochrome b-c1 complex, complex III, CIII) and cytochrome c oxidase (complex IV, CIV), that cooperate to transfer electrons derived from NADH and succinate to molecular oxygen, creating an electrochemical gradient over the inner membrane that drives transmembrane transport and the ATP synthase. Cytochrome c oxidase is the component of the respiratory chain that catalyzes the reduction of oxygen to water. Electrons originating from reduced cytochrome c in the intermembrane space (IMS) are transferred via the dinuclear copper A center (CU(A)) of subunit 2 and heme A of subunit 1 to the active site in subunit 1, a binuclear center (BNC) formed by heme A3 and copper B (CU(B)). The BNC reduces molecular oxygen to 2 water molecules using 4 electrons from cytochrome c in the IMS and 4 protons from the mitochondrial matrix. This chain is Cytochrome c oxidase subunit 5B, mitochondrial (COX5B), found in Sus scrofa (Pig).